Here is a 1100-residue protein sequence, read N- to C-terminus: Isoleucine--tRNA ligase (1100 aa).

Positions 48–58 (PFATGLPHFGH) match the 'HIGH' region motif. The 'KMSKS' region signature appears at 626 to 630 (KMSKS). Lysine 629 provides a ligand contact to ATP.

Belongs to the class-I aminoacyl-tRNA synthetase family. IleS type 2 subfamily. Monomer. Zn(2+) serves as cofactor.

It is found in the cytoplasm. The enzyme catalyses tRNA(Ile) + L-isoleucine + ATP = L-isoleucyl-tRNA(Ile) + AMP + diphosphate. Its function is as follows. Catalyzes the attachment of isoleucine to tRNA(Ile). As IleRS can inadvertently accommodate and process structurally similar amino acids such as valine, to avoid such errors it has two additional distinct tRNA(Ile)-dependent editing activities. One activity is designated as 'pretransfer' editing and involves the hydrolysis of activated Val-AMP. The other activity is designated 'posttransfer' editing and involves deacylation of mischarged Val-tRNA(Ile). In Treponema denticola (strain ATCC 35405 / DSM 14222 / CIP 103919 / JCM 8153 / KCTC 15104), this protein is Isoleucine--tRNA ligase.